Reading from the N-terminus, the 256-residue chain is Cytoplasmic envelopment protein 1 (256 aa).

This sequence belongs to the herpesviridae cytoplasmic envelopment protein 1 family.

The protein localises to the virion. It is found in the virion tegument. It localises to the host cytoplasm. Its subcellular location is the host Golgi apparatus. Functionally, plays a critical role in cytoplasmic virus egress. Participates in the final step of tegumentation and envelope acquisition within the host cytoplasm. The protein is Cytoplasmic envelopment protein 1 (U75) of Homo sapiens (Human).